Here is a 113-residue protein sequence, read N- to C-terminus: Mitochondrial import inner membrane translocase subunit TIM14 (113 aa).

Topologically, residues 1 to 4 (MATP) are mitochondrial intermembrane. The helical transmembrane segment at 5 to 22 (IIVGATIAGIAYSSRFLI) threads the bilayer. Residues 23 to 113 (RVIQRAKSKQ…RNVLSSKNSN (91 aa)) lie on the Mitochondrial matrix side of the membrane. The region spanning 59 to 113 (EAANILGLKEESTKEEIKIRHKLLMIKNHPDKGGSSYLATKINEARNVLSSKNSN) is the J domain.

The protein belongs to the TIM14 family. Interacts with PHB2; the interaction associates DNAJC19 with the prohibitin complex. Interacts with TIMM16/PAM16. May be a component of the PAM complex at least composed of a mitochondrial HSP70 protein, GRPEL1 or GRPEL2, TIMM44, TIMM16/PAM16 and TIMM14/DNAJC19.

Its subcellular location is the mitochondrion inner membrane. Mitochondrial co-chaperone which forms a complex with prohibitins to regulate cardiolipin remodeling. May be a component of the PAM complex, a complex required for the translocation of transit peptide-containing proteins from the inner membrane into the mitochondrial matrix in an ATP-dependent manner. May act as a co-chaperone that stimulate the ATP-dependent activity. In Dictyostelium discoideum (Social amoeba), this protein is Mitochondrial import inner membrane translocase subunit TIM14 (dnajc19).